A 146-amino-acid chain; its full sequence is Hut operon positive regulatory protein (146 aa).

It belongs to the HutP family. In terms of assembly, homohexamer.

Its function is as follows. Antiterminator that binds to cis-acting regulatory sequences on the mRNA in the presence of histidine, thereby suppressing transcription termination and activating the hut operon for histidine utilization. This Bacillus mycoides (strain KBAB4) (Bacillus weihenstephanensis) protein is Hut operon positive regulatory protein.